Here is a 143-residue protein sequence, read N- to C-terminus: Hemoglobin subunit alpha-2 (143 aa).

Ser-2 bears the N-acetylserine mark. The Globin domain occupies Ser-2–Arg-143. His-60 contacts O2. His-89 serves as a coordination point for heme b.

The protein belongs to the globin family. In terms of assembly, hb 2 is a heterotetramer of two alpha-2 and two beta-1 chains. Hb 3 is a heterotetramer of two alpha-2 and two beta-2 chains. Red blood cells.

Its function is as follows. Involved in oxygen transport from gills to the various peripheral tissues. This chain is Hemoglobin subunit alpha-2 (hba2), found in Boreogadus saida (Polar cod).